Here is a 434-residue protein sequence, read N- to C-terminus: Glucose-1-phosphate adenylyltransferase (434 aa).

Residues tyrosine 112, glycine 178, 193–194 (EK), and serine 211 each bind alpha-D-glucose 1-phosphate.

This sequence belongs to the bacterial/plant glucose-1-phosphate adenylyltransferase family. Homotetramer.

The enzyme catalyses alpha-D-glucose 1-phosphate + ATP + H(+) = ADP-alpha-D-glucose + diphosphate. The protein operates within glycan biosynthesis; glycogen biosynthesis. In terms of biological role, involved in the biosynthesis of ADP-glucose, a building block required for the elongation reactions to produce glycogen. Catalyzes the reaction between ATP and alpha-D-glucose 1-phosphate (G1P) to produce pyrophosphate and ADP-Glc. The polypeptide is Glucose-1-phosphate adenylyltransferase (Mannheimia succiniciproducens (strain KCTC 0769BP / MBEL55E)).